An 823-amino-acid polypeptide reads, in one-letter code: Leucine--tRNA ligase (823 aa).

The short motif at 41 to 51 is the 'HIGH' region element; sequence PYPSGTLHVGH. The short motif at 580 to 584 is the 'KMSKS' region element; sequence KMSKS. K583 provides a ligand contact to ATP.

The protein belongs to the class-I aminoacyl-tRNA synthetase family.

The protein resides in the cytoplasm. The catalysed reaction is tRNA(Leu) + L-leucine + ATP = L-leucyl-tRNA(Leu) + AMP + diphosphate. The polypeptide is Leucine--tRNA ligase (Thermosipho melanesiensis (strain DSM 12029 / CIP 104789 / BI429)).